The chain runs to 156 residues: Small ribosomal subunit protein uS7 (156 aa).

This sequence belongs to the universal ribosomal protein uS7 family. Part of the 30S ribosomal subunit. Contacts proteins S9 and S11.

Functionally, one of the primary rRNA binding proteins, it binds directly to 16S rRNA where it nucleates assembly of the head domain of the 30S subunit. Is located at the subunit interface close to the decoding center, probably blocks exit of the E-site tRNA. The polypeptide is Small ribosomal subunit protein uS7 (Pasteurella multocida (strain Pm70)).